Consider the following 189-residue polypeptide: Ribosome hibernation promotion factor (189 aa).

It belongs to the HPF/YfiA ribosome-associated protein family. Long HPF subfamily. Interacts with 100S ribosomes.

Its subcellular location is the cytoplasm. In terms of biological role, required for dimerization of active 70S ribosomes into 100S ribosomes in stationary phase; 100S ribosomes are translationally inactive and sometimes present during exponential growth. The chain is Ribosome hibernation promotion factor from Staphylococcus epidermidis (strain ATCC 35984 / DSM 28319 / BCRC 17069 / CCUG 31568 / BM 3577 / RP62A).